A 205-amino-acid polypeptide reads, in one-letter code: Small ribosomal subunit protein uS4 (205 aa).

Residues 1–16 (MSKRESAKHKIDRRLG) show a composition bias toward basic and acidic residues. The segment at 1–46 (MSKRESAKHKIDRRLGENIWGRPKSPVNRREYGPGQHGQRRKGKLS) is disordered. An S4 RNA-binding domain is found at 94 to 157 (SRLDAVVYRA…KQLAIVLEAV (64 aa)).

Belongs to the universal ribosomal protein uS4 family. Part of the 30S ribosomal subunit. Contacts protein S5. The interaction surface between S4 and S5 is involved in control of translational fidelity.

Its function is as follows. One of the primary rRNA binding proteins, it binds directly to 16S rRNA where it nucleates assembly of the body of the 30S subunit. With S5 and S12 plays an important role in translational accuracy. The polypeptide is Small ribosomal subunit protein uS4 (Brucella abortus (strain S19)).